We begin with the raw amino-acid sequence, 95 residues long: Large ribosomal subunit protein bL31 (95 aa).

The tract at residues 68 to 95 is disordered; that stretch reads AGLNNINKKPEKKKIQGKSEPRKSLNEL. The segment covering 80-95 has biased composition (basic and acidic residues); sequence KKIQGKSEPRKSLNEL.

Belongs to the bacterial ribosomal protein bL31 family. Type A subfamily. In terms of assembly, part of the 50S ribosomal subunit.

In terms of biological role, binds the 23S rRNA. In Ureaplasma parvum serovar 3 (strain ATCC 700970), this protein is Large ribosomal subunit protein bL31.